We begin with the raw amino-acid sequence, 150 residues long: Transcriptional regulator MraZ (150 aa).

2 SpoVT-AbrB domains span residues 8–55 (FINN…GISH) and 84–127 (AVQL…QPQN).

It belongs to the MraZ family. As to quaternary structure, forms oligomers.

The protein resides in the cytoplasm. Its subcellular location is the nucleoid. This is Transcriptional regulator MraZ from Rickettsia bellii (strain OSU 85-389).